Here is a 122-residue protein sequence, read N- to C-terminus: NADH-ubiquinone oxidoreductase chain 3 (122 aa).

3 helical membrane passes run 12-32, 66-86, and 91-111; these read VLIF…LSYV, LVAI…PWAV, and VTIF…VGFI.

Belongs to the complex I subunit 3 family.

It is found in the mitochondrion membrane. The catalysed reaction is a ubiquinone + NADH + 5 H(+)(in) = a ubiquinol + NAD(+) + 4 H(+)(out). Its function is as follows. Core subunit of the mitochondrial membrane respiratory chain NADH dehydrogenase (Complex I) that is believed to belong to the minimal assembly required for catalysis. Complex I functions in the transfer of electrons from NADH to the respiratory chain. The immediate electron acceptor for the enzyme is believed to be ubiquinone. The protein is NADH-ubiquinone oxidoreductase chain 3 (NAD3) of Reclinomonas americana.